Consider the following 69-residue polypeptide: Sec-independent protein translocase protein TatA (69 aa).

A helical transmembrane segment spans residues M1–G21.

Belongs to the TatA/E family. Forms a complex with TatC.

It is found in the cell inner membrane. Part of the twin-arginine translocation (Tat) system that transports large folded proteins containing a characteristic twin-arginine motif in their signal peptide across membranes. TatA could form the protein-conducting channel of the Tat system. In Chlorobium phaeovibrioides (strain DSM 265 / 1930) (Prosthecochloris vibrioformis (strain DSM 265)), this protein is Sec-independent protein translocase protein TatA.